Here is a 200-residue protein sequence, read N- to C-terminus: MGSYTIPNVVERTPQGERSYDVFSRLLSERIIFLGTEIDDGVANVVIAQLLHLESANPEHEIAIYINSPGGSFTSLMAIYDTMTFVQAPISTFCVGQAASTAAVLLAGGDPGRRFVLEHARVLLGQPASGGRQGTVSDLSLQAKEMIRIRSQVEEVLSRHTRHDIATLRADMDRDKVFTAQEAVAYGLADEVLSRRLAVV.

The Nucleophile role is filled by serine 100.

The protein belongs to the peptidase S14 family. As to quaternary structure, fourteen ClpP subunits assemble into 2 heptameric rings which stack back to back to give a disk-like structure with a central cavity, resembling the structure of eukaryotic proteasomes.

The protein resides in the cytoplasm. It catalyses the reaction Hydrolysis of proteins to small peptides in the presence of ATP and magnesium. alpha-casein is the usual test substrate. In the absence of ATP, only oligopeptides shorter than five residues are hydrolyzed (such as succinyl-Leu-Tyr-|-NHMec, and Leu-Tyr-Leu-|-Tyr-Trp, in which cleavage of the -Tyr-|-Leu- and -Tyr-|-Trp bonds also occurs).. Its function is as follows. Cleaves peptides in various proteins in a process that requires ATP hydrolysis. Has a chymotrypsin-like activity. Plays a major role in the degradation of misfolded proteins. This is ATP-dependent Clp protease proteolytic subunit 2 from Streptomyces avermitilis (strain ATCC 31267 / DSM 46492 / JCM 5070 / NBRC 14893 / NCIMB 12804 / NRRL 8165 / MA-4680).